The chain runs to 186 residues: Ribonuclease M5 (186 aa).

Residues 4-94 enclose the Toprim domain; it reads KEIIVVEGRD…AKPKNKRGIG (91 aa). 3 residues coordinate Mg(2+): Glu-10, Asp-56, and Asp-58.

It belongs to the ribonuclease M5 family. In terms of assembly, requires ribosomal protein L18 (rplR) for catalysis; it can be replaced by 30% dimethylsulfoxide suggesting L18 functions as an rRNA folding chaperone. The cofactor is Mg(2+). Mn(2+) is required as a cofactor. Requires Ca(2+) as cofactor.

It is found in the cytoplasm. The catalysed reaction is Endonucleolytic cleavage of RNA, removing 21 and 42 nucleotides, respectively, from the 5'- and 3'-termini of a 5S-rRNA precursor.. In terms of biological role, required for correct processing of both the 5' and 3' ends of 5S rRNA precursor. Cleaves both sides of a double-stranded region yielding mature 5S rRNA in one step. Releases 5'-phosphoryl and 3'-hydroxy termini. The polypeptide is Ribonuclease M5 (Bacillus subtilis (strain 168)).